Reading from the N-terminus, the 270-residue chain is ATP synthase subunit delta (270 aa).

Belongs to the ATPase delta chain family. F-type ATPases have 2 components, F(1) - the catalytic core - and F(0) - the membrane proton channel. F(1) has five subunits: alpha(3), beta(3), gamma(1), delta(1), epsilon(1). F(0) has three main subunits: a(1), b(2) and c(10-14). The alpha and beta chains form an alternating ring which encloses part of the gamma chain. F(1) is attached to F(0) by a central stalk formed by the gamma and epsilon chains, while a peripheral stalk is formed by the delta and b chains.

Its subcellular location is the cell membrane. In terms of biological role, f(1)F(0) ATP synthase produces ATP from ADP in the presence of a proton or sodium gradient. F-type ATPases consist of two structural domains, F(1) containing the extramembraneous catalytic core and F(0) containing the membrane proton channel, linked together by a central stalk and a peripheral stalk. During catalysis, ATP synthesis in the catalytic domain of F(1) is coupled via a rotary mechanism of the central stalk subunits to proton translocation. This protein is part of the stalk that links CF(0) to CF(1). It either transmits conformational changes from CF(0) to CF(1) or is implicated in proton conduction. The polypeptide is ATP synthase subunit delta (Kocuria rhizophila (strain ATCC 9341 / DSM 348 / NBRC 103217 / DC2201)).